The following is a 635-amino-acid chain: Threonine--tRNA ligase (635 aa).

A TGS domain is found at 1–61; the sequence is MITVRLPDGS…EQDSDLSIIT (61 aa). Positions 242 to 533 are catalytic; the sequence is DHRKLGRALD…LIENHAGALP (292 aa). Zn(2+) contacts are provided by Cys333, His384, and His510.

The protein belongs to the class-II aminoacyl-tRNA synthetase family. Homodimer. Zn(2+) serves as cofactor.

The protein resides in the cytoplasm. It catalyses the reaction tRNA(Thr) + L-threonine + ATP = L-threonyl-tRNA(Thr) + AMP + diphosphate + H(+). In terms of biological role, catalyzes the attachment of threonine to tRNA(Thr) in a two-step reaction: L-threonine is first activated by ATP to form Thr-AMP and then transferred to the acceptor end of tRNA(Thr). Also edits incorrectly charged L-seryl-tRNA(Thr). This is Threonine--tRNA ligase from Herminiimonas arsenicoxydans.